The sequence spans 138 residues: NADH dehydrogenase [ubiquinone] 1 alpha subcomplex subunit N7BM (138 aa).

Belongs to the complex I NDUFA12 subunit family. Complex I is composed of 42 different subunits.

Its subcellular location is the mitochondrion inner membrane. Functionally, accessory subunit of the mitochondrial membrane respiratory chain NADH dehydrogenase (Complex I), that is believed not to be involved in catalysis. Complex I functions in the transfer of electrons from NADH to the respiratory chain. The immediate electron acceptor for the enzyme is believed to be ubiquinone. In Yarrowia lipolytica (strain CLIB 122 / E 150) (Yeast), this protein is NADH dehydrogenase [ubiquinone] 1 alpha subcomplex subunit N7BM.